We begin with the raw amino-acid sequence, 314 residues long: Small ribosomal subunit biogenesis GTPase RsgA (314 aa).

The tract at residues 1 to 21 (MKRAPTKQPAKPAARGGERAQ) is disordered. The CP-type G domain occupies 85-246 (SDQFKSKLFA…LIDSPGFQEF (162 aa)). Residues 134-137 (NKID) and 188-196 (GQSGMGKST) each bind GTP. Zn(2+) is bound by residues cysteine 270, cysteine 275, histidine 277, and cysteine 283.

This sequence belongs to the TRAFAC class YlqF/YawG GTPase family. RsgA subfamily. In terms of assembly, monomer. Associates with 30S ribosomal subunit, binds 16S rRNA. Requires Zn(2+) as cofactor.

The protein localises to the cytoplasm. Functionally, one of several proteins that assist in the late maturation steps of the functional core of the 30S ribosomal subunit. Helps release RbfA from mature subunits. May play a role in the assembly of ribosomal proteins into the subunit. Circularly permuted GTPase that catalyzes slow GTP hydrolysis, GTPase activity is stimulated by the 30S ribosomal subunit. This chain is Small ribosomal subunit biogenesis GTPase RsgA, found in Burkholderia pseudomallei (strain 1106a).